Reading from the N-terminus, the 197-residue chain is Chitin synthase 3 (197 aa).

It belongs to the chitin synthase family. Class III subfamily.

The protein localises to the cell membrane. The catalysed reaction is [(1-&gt;4)-N-acetyl-beta-D-glucosaminyl](n) + UDP-N-acetyl-alpha-D-glucosamine = [(1-&gt;4)-N-acetyl-beta-D-glucosaminyl](n+1) + UDP + H(+). Its function is as follows. Polymerizes chitin, a structural polymer of the cell wall and septum, by transferring the sugar moiety of UDP-GlcNAc to the non-reducing end of the growing chitin polymer. The sequence is that of Chitin synthase 3 (CHS3) from Exophiala jeanselmei (Dematiaceous fungus).